A 373-amino-acid polypeptide reads, in one-letter code: RNA 3'-terminal phosphate cyclase-like protein (373 aa).

It belongs to the RNA 3'-terminal cyclase family. Type 2 subfamily. In terms of assembly, part of the small subunit (SSU) processome, composed of more than 70 proteins and the RNA chaperone small nucleolar RNA (snoRNA) U3. Interacts with BMS1.

It is found in the nucleus. It localises to the nucleolus. Its function is as follows. As part of the small subunit (SSU) processome, it plays a role in 40S-ribosomal-subunit biogenesis in the early pre-rRNA processing steps at sites A0, A1 and A2 that are required for proper maturation of the 18S RNA. Activates BMS1 by promoting GDP/GTP exchange. Does not have cyclase activity. This Mus musculus (Mouse) protein is RNA 3'-terminal phosphate cyclase-like protein (Rcl1).